The primary structure comprises 238 residues: Phosphoribosylaminoimidazole-succinocarboxamide synthase (238 aa).

This sequence belongs to the SAICAR synthetase family.

The catalysed reaction is 5-amino-1-(5-phospho-D-ribosyl)imidazole-4-carboxylate + L-aspartate + ATP = (2S)-2-[5-amino-1-(5-phospho-beta-D-ribosyl)imidazole-4-carboxamido]succinate + ADP + phosphate + 2 H(+). The protein operates within purine metabolism; IMP biosynthesis via de novo pathway; 5-amino-1-(5-phospho-D-ribosyl)imidazole-4-carboxamide from 5-amino-1-(5-phospho-D-ribosyl)imidazole-4-carboxylate: step 1/2. The polypeptide is Phosphoribosylaminoimidazole-succinocarboxamide synthase (Persephonella marina (strain DSM 14350 / EX-H1)).